The chain runs to 351 residues: UDP-3-O-acylglucosamine N-acyltransferase (351 aa).

The active-site Proton acceptor is His-240.

Belongs to the transferase hexapeptide repeat family. LpxD subfamily. Homotrimer.

The enzyme catalyses a UDP-3-O-[(3R)-3-hydroxyacyl]-alpha-D-glucosamine + a (3R)-hydroxyacyl-[ACP] = a UDP-2-N,3-O-bis[(3R)-3-hydroxyacyl]-alpha-D-glucosamine + holo-[ACP] + H(+). Its pathway is bacterial outer membrane biogenesis; LPS lipid A biosynthesis. Functionally, catalyzes the N-acylation of UDP-3-O-acylglucosamine using 3-hydroxyacyl-ACP as the acyl donor. Is involved in the biosynthesis of lipid A, a phosphorylated glycolipid that anchors the lipopolysaccharide to the outer membrane of the cell. This chain is UDP-3-O-acylglucosamine N-acyltransferase, found in Pseudomonas syringae pv. syringae (strain B728a).